The primary structure comprises 150 residues: Endoribonuclease YbeY (150 aa).

Residues His-102, His-106, and His-112 each coordinate Zn(2+).

Belongs to the endoribonuclease YbeY family. Requires Zn(2+) as cofactor.

The protein resides in the cytoplasm. Single strand-specific metallo-endoribonuclease involved in late-stage 70S ribosome quality control and in maturation of the 3' terminus of the 16S rRNA. This chain is Endoribonuclease YbeY, found in Thermotoga maritima (strain ATCC 43589 / DSM 3109 / JCM 10099 / NBRC 100826 / MSB8).